A 264-amino-acid chain; its full sequence is tRNA pseudouridine synthase A (264 aa).

Residue D51 is the Nucleophile of the active site. Y109 is a binding site for substrate.

Belongs to the tRNA pseudouridine synthase TruA family. As to quaternary structure, homodimer.

The catalysed reaction is uridine(38/39/40) in tRNA = pseudouridine(38/39/40) in tRNA. Its function is as follows. Formation of pseudouridine at positions 38, 39 and 40 in the anticodon stem and loop of transfer RNAs. This chain is tRNA pseudouridine synthase A, found in Pasteurella multocida (strain Pm70).